The chain runs to 144 residues: 3-hydroxyacyl-[acyl-carrier-protein] dehydratase FabZ (144 aa).

The active site involves His51.

This sequence belongs to the thioester dehydratase family. FabZ subfamily.

The protein localises to the cytoplasm. It carries out the reaction a (3R)-hydroxyacyl-[ACP] = a (2E)-enoyl-[ACP] + H2O. Functionally, involved in unsaturated fatty acids biosynthesis. Catalyzes the dehydration of short chain beta-hydroxyacyl-ACPs and long chain saturated and unsaturated beta-hydroxyacyl-ACPs. In Lactococcus lactis subsp. lactis (strain IL1403) (Streptococcus lactis), this protein is 3-hydroxyacyl-[acyl-carrier-protein] dehydratase FabZ (fabZ2).